Reading from the N-terminus, the 205-residue chain is Outer-membrane lipoprotein carrier protein (205 aa).

The first 21 residues, 1–21 (MRFLAVATMVVALMVPWSVRA), serve as a signal peptide directing secretion.

Belongs to the LolA family. As to quaternary structure, monomer.

The protein localises to the periplasm. Participates in the translocation of lipoproteins from the inner membrane to the outer membrane. Only forms a complex with a lipoprotein if the residue after the N-terminal Cys is not an aspartate (The Asp acts as a targeting signal to indicate that the lipoprotein should stay in the inner membrane). The protein is Outer-membrane lipoprotein carrier protein of Methylobacillus flagellatus (strain ATCC 51484 / DSM 6875 / VKM B-1610 / KT).